The primary structure comprises 338 residues: Elongation factor Ts, mitochondrial (338 aa).

A mitochondrion-targeting transit peptide spans 1 to 42; the sequence is MSPSIAMFTLTPNARALASKTSKMDLIKNLRERTGAPIVDVK.

The protein belongs to the EF-Ts family.

It localises to the mitochondrion. In terms of biological role, associates with the EF-Tu.GDP complex and induces the exchange of GDP to GTP. It remains bound to the aminoacyl-tRNA.EF-Tu.GTP complex up to the GTP hydrolysis stage on the ribosome. This Ostreococcus tauri protein is Elongation factor Ts, mitochondrial.